A 65-amino-acid chain; its full sequence is Large ribosomal subunit protein bL35c (65 aa).

The disordered stretch occupies residues 18–50; sequence SSGKILRHKASKSHLLQKKSSKHRRHLSSTCQV. A compositionally biased stretch (basic residues) spans 22-44; that stretch reads ILRHKASKSHLLQKKSSKHRRHL.

The protein belongs to the bacterial ribosomal protein bL35 family.

It is found in the plastid. Its subcellular location is the chloroplast. This chain is Large ribosomal subunit protein bL35c, found in Porphyra purpurea (Red seaweed).